Here is a 103-residue protein sequence, read N- to C-terminus: Signal recognition particle 19 kDa protein (103 aa).

Belongs to the SRP19 family. In terms of assembly, part of the signal recognition particle protein translocation system, which is composed of SRP and FtsY. Archaeal SRP consists of a 7S RNA molecule of 300 nucleotides and two protein subunits: SRP54 and SRP19.

The protein localises to the cytoplasm. Involved in targeting and insertion of nascent membrane proteins into the cytoplasmic membrane. Binds directly to 7S RNA and mediates binding of the 54 kDa subunit of the SRP. This is Signal recognition particle 19 kDa protein from Hyperthermus butylicus (strain DSM 5456 / JCM 9403 / PLM1-5).